The sequence spans 266 residues: 4-hydroxy-tetrahydrodipicolinate reductase (266 aa).

11–16 (GALGKM) contacts NAD(+). Lysine 39 lines the NADP(+) pocket. 100 to 102 (GTT) contributes to the NAD(+) binding site. The active-site Proton donor/acceptor is histidine 156. Histidine 157 contributes to the (S)-2,3,4,5-tetrahydrodipicolinate binding site. Residue lysine 160 is the Proton donor of the active site. Residue 166-167 (GT) participates in (S)-2,3,4,5-tetrahydrodipicolinate binding.

The protein belongs to the DapB family.

It localises to the cytoplasm. It carries out the reaction (S)-2,3,4,5-tetrahydrodipicolinate + NAD(+) + H2O = (2S,4S)-4-hydroxy-2,3,4,5-tetrahydrodipicolinate + NADH + H(+). It catalyses the reaction (S)-2,3,4,5-tetrahydrodipicolinate + NADP(+) + H2O = (2S,4S)-4-hydroxy-2,3,4,5-tetrahydrodipicolinate + NADPH + H(+). It functions in the pathway amino-acid biosynthesis; L-lysine biosynthesis via DAP pathway; (S)-tetrahydrodipicolinate from L-aspartate: step 4/4. Catalyzes the conversion of 4-hydroxy-tetrahydrodipicolinate (HTPA) to tetrahydrodipicolinate. This Syntrophomonas wolfei subsp. wolfei (strain DSM 2245B / Goettingen) protein is 4-hydroxy-tetrahydrodipicolinate reductase.